The chain runs to 679 residues: Glycine--tRNA ligase beta subunit (679 aa).

It belongs to the class-II aminoacyl-tRNA synthetase family. Tetramer of two alpha and two beta subunits.

The protein localises to the cytoplasm. It carries out the reaction tRNA(Gly) + glycine + ATP = glycyl-tRNA(Gly) + AMP + diphosphate. The protein is Glycine--tRNA ligase beta subunit of Streptococcus pyogenes serotype M12 (strain MGAS9429).